Reading from the N-terminus, the 72-residue chain is Large ribosomal subunit protein bL31 (72 aa).

Zn(2+) contacts are provided by C16, C18, C37, and C40.

The protein belongs to the bacterial ribosomal protein bL31 family. Type A subfamily. Part of the 50S ribosomal subunit. Requires Zn(2+) as cofactor.

In terms of biological role, binds the 23S rRNA. This is Large ribosomal subunit protein bL31 from Hahella chejuensis (strain KCTC 2396).